A 326-amino-acid chain; its full sequence is CRISPR-associated endonuclease Cas1 (326 aa).

Glutamate 191, histidine 255, and aspartate 269 together coordinate Mn(2+).

The protein belongs to the CRISPR-associated endonuclease Cas1 family. Homodimer. Interacts with Cas3, in the absence of crRNA. Mg(2+) is required as a cofactor. The cofactor is Mn(2+).

CRISPR (clustered regularly interspaced short palindromic repeat), is an adaptive immune system that provides protection against mobile genetic elements (viruses, transposable elements and conjugative plasmids). CRISPR clusters contain sequences complementary to antecedent mobile elements and target invading nucleic acids. CRISPR clusters are transcribed and processed into CRISPR RNA (crRNA). Acts as a dsDNA endonuclease. Involved in the integration of spacer DNA into the CRISPR cassette. The chain is CRISPR-associated endonuclease Cas1 from Pectobacterium atrosepticum (strain SCRI 1043 / ATCC BAA-672) (Erwinia carotovora subsp. atroseptica).